A 46-amino-acid chain; its full sequence is Protein YpdJ (46 aa).

Its function is as follows. May be involved in H(2) production during fermentative growth. This chain is Protein YpdJ (ypdJ), found in Escherichia coli (strain K12).